The primary structure comprises 131 residues: Profilin-7 (131 aa).

A disulfide bridge connects residues C13 and C115. An Involved in PIP2 interaction motif is present at residues 81-97; that stretch reads AVIRGKKGAGGITIKKT. T111 carries the post-translational modification Phosphothreonine.

Belongs to the profilin family. As to quaternary structure, occurs in many kinds of cells as a complex with monomeric actin in a 1:1 ratio. In terms of processing, phosphorylated by MAP kinases.

It localises to the cytoplasm. It is found in the cytoskeleton. Binds to actin and affects the structure of the cytoskeleton. At high concentrations, profilin prevents the polymerization of actin, whereas it enhances it at low concentrations. In Olea europaea (Common olive), this protein is Profilin-7.